Consider the following 176-residue polypeptide: uncharacterized protein (176 aa).

Positions 1–22 are cleaved as a signal peptide; the sequence is MKYNNIIFLGLCLGLTTYSALS. Cysteine 38 and cysteine 78 are oxidised to a cystine.

It belongs to the fimbrial protein family.

The protein localises to the fimbrium. This is an uncharacterized protein from Escherichia coli (strain K12).